The following is a 266-amino-acid chain: Glutathione S-transferase AN1595 (266 aa).

The GST N-terminal domain maps to 43-123; sequence SFGKLYTYKR…HVTNEDSTTT (81 aa). Glutathione is bound by residues lysine 93, glutamate 107, cysteine 108, and asparagine 143. Lysine 93 provides a ligand contact to substrate. The region spanning 128–259 is the GST C-terminal domain; the sequence is SSLDFVQIIR…VEEGLPNAPP (132 aa).

Belongs to the GST superfamily.

It functions in the pathway secondary metabolite biosynthesis; terpenoid biosynthesis. Functionally, glutathione S-transferase; part of the gene cluster that mediates the biosynthesis of the diterpene ent-pimara-8(14),15-diene (PD). Within the cluster, the HMG-CoA reductase AN1593 functions in the mevalonate pathway, which produces isoprenoid precursors. The geranylgeranyl pyrophosphate (GGPP) synthase AN1592 is needed in the formation of GGPP, the precursor for diterpenes. Lastly, the pimaradiene synthase pbcA performs the 2 cyclization steps that convert GGPP to ent-pimara-8(14),15-diene. The putative roles of the remaining cluster enzymes in ent-pimara-8(14),15-diene biosynthesis is unclear. The cytochrome P450 monooxygenase AN1598, the glutathione S-transferase AN1595, the oxidoreductases AN1596 and AN1597 probably function as decorative enzymes. It is possible that in biological conditions the compound is oxidized to ent-pimara-8(14),15-dien-19-oic acid, which is a bioactive diterpene compound predominant in many plant extracts. The sequence is that of Glutathione S-transferase AN1595 from Emericella nidulans (strain FGSC A4 / ATCC 38163 / CBS 112.46 / NRRL 194 / M139) (Aspergillus nidulans).